A 200-amino-acid polypeptide reads, in one-letter code: Adenylate kinase (200 aa).

11–16 provides a ligand contact to ATP; the sequence is GAGKGT. Residues 31–60 form an NMP region; sequence STGDIFRQNIKDRTELGQQVQALVDAGNYV. AMP contacts are provided by residues threonine 32, arginine 37, 58-60, 86-89, and glutamine 93; these read NYV and GYPR. An LID region spans residues 127-137; sequence RRAAEQGRADD. Arginine 128 contributes to the ATP binding site. Arginine 134 and arginine 145 together coordinate AMP. Glycine 173 is a binding site for ATP.

Belongs to the adenylate kinase family. In terms of assembly, monomer.

Its subcellular location is the cytoplasm. It catalyses the reaction AMP + ATP = 2 ADP. It participates in purine metabolism; AMP biosynthesis via salvage pathway; AMP from ADP: step 1/1. Catalyzes the reversible transfer of the terminal phosphate group between ATP and AMP. Plays an important role in cellular energy homeostasis and in adenine nucleotide metabolism. The sequence is that of Adenylate kinase from Clavibacter michiganensis subsp. michiganensis (strain NCPPB 382).